The chain runs to 236 residues: Small ribosomal subunit protein uS3 (236 aa).

Positions 38-106 constitute a KH type-2 domain; it reads LRRYLHTRLK…DIQINISEIK (69 aa). The interval 211–236 is disordered; the sequence is DLSPNVQAQQRKMKESPQQRRQRRGG.

This sequence belongs to the universal ribosomal protein uS3 family. Part of the 30S ribosomal subunit. Forms a tight complex with proteins S10 and S14.

Binds the lower part of the 30S subunit head. Binds mRNA in the 70S ribosome, positioning it for translation. This is Small ribosomal subunit protein uS3 from Salinibacter ruber (strain DSM 13855 / M31).